The primary structure comprises 801 residues: Glycerol-3-phosphate acyltransferase 2, mitochondrial (801 aa).

The interval 1–24 (MDTMLKSNPQTQQRSNHNGQETSL) is disordered. Over 1-305 (MDTMLKSNPQ…PGPRLSALGQ (305 aa)) the chain is Cytoplasmic. Residues 180–290 (QLHKGQMKMV…SGQPLLIFLE (111 aa)) form an acyltransferase region. The HXXXXD motif signature appears at 205–210 (HKSLLD). A helical transmembrane segment spans residues 306–332 (AWLGVVIQAVQAGIISDATLVPVAIAY). Residues 333 to 449 (DLVPDAPCNM…QLLVRRLSRH (117 aa)) lie on the Mitochondrial intermembrane side of the membrane. Residues 450–472 (VLSASVASSAVMSTAIMATLLLL) traverse the membrane as a helical segment. The Cytoplasmic segment spans residues 473–801 (KHQKGVVLSQ…EQFIRQFICS (329 aa)). Ser-662 bears the Phosphoserine mark. Residue Thr-666 is modified to Phosphothreonine. Ser-668 and Ser-670 each carry phosphoserine.

This sequence belongs to the GPAT/DAPAT family. In terms of assembly, interacts with PIWIL2. In terms of tissue distribution, highly expressed in the testis. Expressed at lower levels in the heart, liver, kidney, spleen and adipose cells. Only detected in primary spermatocytes.

The protein localises to the mitochondrion outer membrane. The enzyme catalyses sn-glycerol 3-phosphate + an acyl-CoA = a 1-acyl-sn-glycero-3-phosphate + CoA. The catalysed reaction is a 1-acyl-sn-glycero-3-phosphate + an acyl-CoA = a 1,2-diacyl-sn-glycero-3-phosphate + CoA. It carries out the reaction 1-(9Z-octadecenoyl)-sn-glycero-3-phosphate + (9Z)-octadecenoyl-CoA = 1,2-di-(9Z-octadecenoyl)-sn-glycero-3-phosphate + CoA. It catalyses the reaction 1-(9Z-octadecenoyl)-sn-glycero-3-phosphate + (5Z,8Z,11Z,14Z)-eicosatetraenoyl-CoA = 1-(9Z)-octadecenoyl-2-(5Z,8Z,11Z,14Z)-eicosatetraenoyl-sn-glycero-3-phosphate + CoA. The enzyme catalyses (5Z,8Z,11Z,14Z)-eicosatetraenoyl-CoA + sn-glycerol 3-phosphate = 1-(5Z,8Z,11Z,14Z-eicosatetraenoyl)-sn-glycero-3-phosphate + CoA. Its pathway is phospholipid metabolism; CDP-diacylglycerol biosynthesis; CDP-diacylglycerol from sn-glycerol 3-phosphate: step 1/3. Inhibited by N-ethylmaleimide (NEM). In terms of biological role, transfers an acyl-group from acyl-ACP to the sn-1 position of glycerol-3-phosphate producing a lysophosphatidic acid (LPA), an essential step for the triacylglycerol (TAG) and glycerophospholipids. In vitro also transfers an acyl-group from acyl-ACP to the LPA producing a phosphatidic acid (PA). Prefers arachidonoyl-CoA as the acyl donor. Required for primary processing step during piRNA biosynthesis. Molecular mechanisms by which it promotes piRNA biosynthesis are unclear and do not involve its acyltransferase activity. The protein is Glycerol-3-phosphate acyltransferase 2, mitochondrial of Mus musculus (Mouse).